Here is a 146-residue protein sequence, read N- to C-terminus: Ferredoxin-thioredoxin reductase catalytic chain, chloroplastic (146 aa).

Residues 1–31 constitute a chloroplast transit peptide; it reads MNLQAVSCSFGFLSSPLGVTPRTSFRRFVIR. C85 contributes to the [4Fe-4S] cluster binding site. C87 serves as the catalytic Nucleophile. Residues C87 and C117 are joined by a disulfide bond. [4Fe-4S] cluster contacts are provided by C104, C106, and C115.

This sequence belongs to the ferredoxin thioredoxin reductase beta subunit family. As to quaternary structure, heterodimer of subunit A (variable subunit) and subunit B (catalytic subunit). Heterodimeric FTR forms a complex with ferredoxin and thioredoxin. Requires [4Fe-4S] cluster as cofactor.

It localises to the plastid. The protein resides in the chloroplast. It catalyses the reaction [thioredoxin]-disulfide + 2 reduced [2Fe-2S]-[ferredoxin] + 2 H(+) = [thioredoxin]-dithiol + 2 oxidized [2Fe-2S]-[ferredoxin]. Functionally, catalytic subunit of the ferredoxin-thioredoxin reductase (FTR), which catalyzes the two-electron reduction of thioredoxins by the electrons provided by reduced ferredoxin. In Arabidopsis thaliana (Mouse-ear cress), this protein is Ferredoxin-thioredoxin reductase catalytic chain, chloroplastic.